The chain runs to 127 residues: Large ribosomal subunit protein bL20 (127 aa).

This sequence belongs to the bacterial ribosomal protein bL20 family.

Its function is as follows. Binds directly to 23S ribosomal RNA and is necessary for the in vitro assembly process of the 50S ribosomal subunit. It is not involved in the protein synthesizing functions of that subunit. In Corynebacterium aurimucosum (strain ATCC 700975 / DSM 44827 / CIP 107346 / CN-1) (Corynebacterium nigricans), this protein is Large ribosomal subunit protein bL20.